Here is a 394-residue protein sequence, read N- to C-terminus: Monoterpene synthase FDS-5, chloroplastic (394 aa).

Residues 1 to 65 (MASFISLSSK…NLNSQFMQVY (65 aa)) constitute a chloroplast transit peptide. The isopentenyl diphosphate site is built by Lys-100, Arg-103, and Gln-138. Mg(2+)-binding residues include Asp-145 and Asp-149. The DDXXD motif motif lies at 145–149 (DDMMD). Arg-154 contacts dimethylallyl diphosphate. Residue Arg-155 participates in isopentenyl diphosphate binding. Dimethylallyl diphosphate is bound by residues Lys-242, Gln-281, Lys-298, and Lys-307.

The protein belongs to the FPP/GGPP synthase family. Mg(2+) serves as cofactor. Requires Mn(2+) as cofactor.

The protein localises to the plastid. The protein resides in the chloroplast. It carries out the reaction isopentenyl diphosphate + dimethylallyl diphosphate = (2E)-geranyl diphosphate + diphosphate. It catalyses the reaction 2 dimethylallyl diphosphate = (R,R)-chrysanthemyl diphosphate + diphosphate. The enzyme catalyses 2 dimethylallyl diphosphate = (R)-lavandulyl diphosphate + diphosphate. Functionally, condenses two molecules of dimethylallyl diphosphate (DMAPP) to produce mainly an irregular monoterpene, chrysanthemyl diphosphate (CPP) and lower amounts of a branched monoterpene, lavandulyl diphosphate (LPP). CPP is a precursor of the pyrethrin insecticides. When incubated with isopentenyl diphosphate (IPP) and DMAPP, catalyzes three competing isoprenoid condensation reactions, a chain elongation to give geranyl diphosphate (GPP), a cyclopropanation to give CPP and a branching to give LPP. The chain is Monoterpene synthase FDS-5, chloroplastic (FDS-5) from Artemisia spiciformis (Spiked big sagebrush).